The chain runs to 322 residues: Ferrochelatase (322 aa).

Fe cation-binding residues include His-193 and Glu-274.

It belongs to the ferrochelatase family.

It is found in the cytoplasm. It carries out the reaction heme b + 2 H(+) = protoporphyrin IX + Fe(2+). It functions in the pathway porphyrin-containing compound metabolism; protoheme biosynthesis; protoheme from protoporphyrin-IX: step 1/1. Functionally, catalyzes the ferrous insertion into protoporphyrin IX. The polypeptide is Ferrochelatase (Aliivibrio fischeri (strain MJ11) (Vibrio fischeri)).